Consider the following 196-residue polypeptide: Probable splicing factor, arginine/serine-rich 4 (196 aa).

In terms of domain architecture, RRM spans 19 to 97; the sequence is TSLKIDNLSY…RELRVTLAKY (79 aa). Residues 91–106 show a composition bias toward basic and acidic residues; it reads RVTLAKYDRPSDERGG. The interval 91–196 is disordered; that stretch reads RVTLAKYDRP…SPSRSRSNSR (106 aa). The segment covering 112 to 141 has biased composition (basic residues); it reads GRRRSRSPRRRSRSPRYSRSRSPRRSRSRT. 2 stretches are compositionally biased toward basic and acidic residues: residues 145–160 and 167–176; these read PSRD…DNSR and PPREDGSPKE. The segment covering 184-196 has biased composition (low complexity); sequence ASRSPSRSRSNSR.

It belongs to the splicing factor SR family. Extensively phosphorylated on serine residues in the RS domain.

The protein resides in the nucleus. Its function is as follows. May play a functionally redundant role in embryogenesis. The protein is Probable splicing factor, arginine/serine-rich 4 (rsp-4) of Caenorhabditis elegans.